Reading from the N-terminus, the 267-residue chain is 4-hydroxy-tetrahydrodipicolinate reductase (267 aa).

NAD(+) is bound by residues 8-13 and D34; that span reads GAAGRM. R35 provides a ligand contact to NADP(+). NAD(+)-binding positions include 98–100 and 122–125; these read GTT and AANF. H155 functions as the Proton donor/acceptor in the catalytic mechanism. H156 contributes to the (S)-2,3,4,5-tetrahydrodipicolinate binding site. Catalysis depends on K159, which acts as the Proton donor. 165 to 166 is a (S)-2,3,4,5-tetrahydrodipicolinate binding site; it reads GT.

The protein belongs to the DapB family.

It localises to the cytoplasm. The enzyme catalyses (S)-2,3,4,5-tetrahydrodipicolinate + NAD(+) + H2O = (2S,4S)-4-hydroxy-2,3,4,5-tetrahydrodipicolinate + NADH + H(+). It carries out the reaction (S)-2,3,4,5-tetrahydrodipicolinate + NADP(+) + H2O = (2S,4S)-4-hydroxy-2,3,4,5-tetrahydrodipicolinate + NADPH + H(+). Its pathway is amino-acid biosynthesis; L-lysine biosynthesis via DAP pathway; (S)-tetrahydrodipicolinate from L-aspartate: step 4/4. In terms of biological role, catalyzes the conversion of 4-hydroxy-tetrahydrodipicolinate (HTPA) to tetrahydrodipicolinate. This is 4-hydroxy-tetrahydrodipicolinate reductase from Pseudomonas savastanoi pv. phaseolicola (strain 1448A / Race 6) (Pseudomonas syringae pv. phaseolicola (strain 1448A / Race 6)).